The chain runs to 328 residues: Tryptophan--tRNA ligase (328 aa).

Residues Gln11–Thr13 and Gly19–Asn20 contribute to the ATP site. The 'HIGH' region motif lies at Pro12 to Asn20. Position 135 (Asp135) interacts with L-tryptophan. ATP contacts are provided by residues Gly147–Asp149, Ile186, and Lys195–Ser199. Residues Lys195–Ser199 carry the 'KMSKS' region motif.

It belongs to the class-I aminoacyl-tRNA synthetase family. In terms of assembly, homodimer.

Its subcellular location is the cytoplasm. It carries out the reaction tRNA(Trp) + L-tryptophan + ATP = L-tryptophyl-tRNA(Trp) + AMP + diphosphate + H(+). Its function is as follows. Catalyzes the attachment of tryptophan to tRNA(Trp). This Wolinella succinogenes (strain ATCC 29543 / DSM 1740 / CCUG 13145 / JCM 31913 / LMG 7466 / NCTC 11488 / FDC 602W) (Vibrio succinogenes) protein is Tryptophan--tRNA ligase.